The sequence spans 149 residues: Oligosaccharyltransferase complex subunit ostc (149 aa).

Residues 1–32 are Cytoplasmic-facing; the sequence is MESLYRVPFTVLECPNLKLKKPSWLHMPSAMT. A helical transmembrane segment spans residues 33-53; the sequence is VYAMVVVSYFLITGGIIYDVI. The Extracellular segment spans residues 54 to 83; sequence VEPPSVGSMTDEHGHQRPVAFLAYRVNGQY. Residues 84-104 form a helical membrane-spanning segment; sequence IMEGLASSFLFTMGGLGFIIL. Residues 105 to 117 lie on the Cytoplasmic side of the membrane; it reads DRSNAPNIPKLNR. The helical transmembrane segment at 118–138 threads the bilayer; that stretch reads FLLLFIGFVCVLLSFFMARVF. The Extracellular portion of the chain corresponds to 139–149; sequence MRMKLPGYLMG.

Belongs to the OSTC family. In terms of assembly, specific component of the STT3A-containing form of the oligosaccharyltransferase (OST) complex.

It is found in the membrane. It participates in protein modification; protein glycosylation. Its function is as follows. Specific component of the STT3A-containing form of the oligosaccharyl transferase (OST) complex that catalyzes the initial transfer of a defined glycan (Glc(3)Man(9)GlcNAc(2) in eukaryotes) from the lipid carrier dolichol-pyrophosphate to an asparagine residue within an Asn-X-Ser/Thr consensus motif in nascent polypeptide chains, the first step in protein N-glycosylation. N-glycosylation occurs cotranslationally and the complex associates with the Sec61 complex at the channel-forming translocon complex that mediates protein translocation across the endoplasmic reticulum (ER). All subunits are required for a maximal enzyme activity. This chain is Oligosaccharyltransferase complex subunit ostc, found in Xenopus tropicalis (Western clawed frog).